The chain runs to 176 residues: Ribosome maturation factor RimM (176 aa).

In terms of domain architecture, PRC barrel spans 100–173 (PGEFHLLDLL…WLMVCPPPGL (74 aa)).

Belongs to the RimM family. In terms of assembly, binds ribosomal protein uS19.

It is found in the cytoplasm. In terms of biological role, an accessory protein needed during the final step in the assembly of 30S ribosomal subunit, possibly for assembly of the head region. Essential for efficient processing of 16S rRNA. May be needed both before and after RbfA during the maturation of 16S rRNA. It has affinity for free ribosomal 30S subunits but not for 70S ribosomes. The protein is Ribosome maturation factor RimM of Prochlorococcus marinus (strain SARG / CCMP1375 / SS120).